The sequence spans 255 residues: Acetylglutamate kinase (255 aa).

Substrate contacts are provided by residues 40-41, arginine 62, and asparagine 153; that span reads GG.

Belongs to the acetylglutamate kinase family. ArgB subfamily.

The protein resides in the cytoplasm. The catalysed reaction is N-acetyl-L-glutamate + ATP = N-acetyl-L-glutamyl 5-phosphate + ADP. It functions in the pathway amino-acid biosynthesis; L-arginine biosynthesis; N(2)-acetyl-L-ornithine from L-glutamate: step 2/4. Functionally, catalyzes the ATP-dependent phosphorylation of N-acetyl-L-glutamate. The protein is Acetylglutamate kinase of Bacillus anthracis (strain A0248).